Reading from the N-terminus, the 289-residue chain is E3 ubiquitin-protein ligase MARCHF1 (289 aa).

The tract at residues 1–66 (MLGWCEAIAR…SPTTGTAPRS (66 aa)) is responsible for low stability. Residues 13 to 69 (HRIPNNTRTPEISGDLADASQTSTLNEKSPGRSASRSSNISKASSPTTGTAPRSQSR) form a disordered region. Residues 43 to 58 (GRSASRSSNISKASSP) are compositionally biased toward low complexity. The segment covering 59 to 69 (TTGTAPRSQSR) has biased composition (polar residues). Residues 72–133 (VCPSTQDICR…ELCKYDFIME (62 aa)) form an RING-CH-type zinc finger. Cys80, Cys83, Cys97, Cys99, His107, Cys110, Cys123, and Cys126 together coordinate Zn(2+). The next 2 membrane-spanning stretches (helical) occupy residues 155 to 175 (IFCSVTFHVIAITCVVWSLYV) and 197 to 217 (FWTKLVVVAIGFTGGLVFMYV). Residues 222–279 (YVQLWRRLKAYNRVIFVQNCPDTAKKLEKNFSCNVNTDIKDAVVVPVPQTGANSLPSA) are responsible for down-regulation of CD86 and MHC class II cell surface expression.

In terms of assembly, interacts with CD83; this interaction antagonizes MARCHF1-mediated MHC II and CD86 down-regulation. In terms of processing, ubiquitinated via ubiquitin-conjugating enzyme E2 D1/UBE2D1 independently of lysines, leading to proteolytic degradation. Post-translationally, has a short half-life. Instability/short half-life permits rapid changes that allow efficient induction of antigen presentation once antigen presenting cells, APCs, receive maturation signals. Small changes in protein levels significantly alter the cell surface display of MHC class II proteins. As to expression, expressed in antigen presenting cells, APCs, located in lymph nodes and spleen. Also expressed in lung. Expression is high in follicular B-cells, moderate in dendritic cells and low in splenic T-cells.

The protein resides in the golgi apparatus. It localises to the trans-Golgi network membrane. It is found in the lysosome membrane. The protein localises to the cytoplasmic vesicle membrane. Its subcellular location is the late endosome membrane. The protein resides in the early endosome membrane. It localises to the cell membrane. It carries out the reaction S-ubiquitinyl-[E2 ubiquitin-conjugating enzyme]-L-cysteine + [acceptor protein]-L-lysine = [E2 ubiquitin-conjugating enzyme]-L-cysteine + N(6)-ubiquitinyl-[acceptor protein]-L-lysine.. It functions in the pathway protein modification; protein ubiquitination. In terms of biological role, E3 ubiquitin-protein ligase that mediates ubiquitination of TFRC, CD86, FAS and MHC class II proteins, such as HLA-DR alpha and beta, and promotes their subsequent endocytosis and sorting to lysosomes via multivesicular bodies. By constitutively ubiquitinating MHC class II proteins in immature dendritic cells, down-regulates their cell surface localization thus sequestering them in the intracellular endosomal system. Also regulates insulin sensitivity by controlling surface expression of the insulin receptor subunit beta/INSR by direct ubiquitination and degradation. Functionally, (Microbial infection) Plays a role in iron metabolism by regulating the levels of the transferrin receptor TFRC during human cytomegalovirus infection, subsequently contributing to a proviral effect. In Homo sapiens (Human), this protein is E3 ubiquitin-protein ligase MARCHF1.